The primary structure comprises 470 residues: Probable citrate synthase, mitochondrial (470 aa).

Catalysis depends on residues H297, H351, and D406.

This sequence belongs to the citrate synthase family. As to quaternary structure, homodimer.

The protein localises to the mitochondrion matrix. It catalyses the reaction oxaloacetate + acetyl-CoA + H2O = citrate + CoA + H(+). Its pathway is carbohydrate metabolism; tricarboxylic acid cycle; isocitrate from oxaloacetate: step 1/2. This Leishmania infantum protein is Probable citrate synthase, mitochondrial.